We begin with the raw amino-acid sequence, 584 residues long: ATP-dependent lipid A-core flippase (584 aa).

The next 5 helical transmembrane spans lie at 18 to 38 (LWPI…TLIL), 65 to 85 (VFVW…FSGF), 155 to 175 (IIGL…ILVL), 252 to 272 (IFDP…LYAA), and 277 to 297 (VMEM…IVLM). The ABC transmembrane type-1 domain maps to 30–312 (VVASITLILN…LTNVSAQFQR (283 aa)). Residues 344 to 580 (IIFDDVTFFY…QGIYAQLYKL (237 aa)) enclose the ABC transporter domain. Position 378-385 (378-385 (GRSGSGKS)) interacts with ATP.

The protein belongs to the ABC transporter superfamily. Lipid exporter (TC 3.A.1.106) family. Homodimer.

The protein resides in the cell inner membrane. The enzyme catalyses ATP + H2O + lipid A-core oligosaccharideSide 1 = ADP + phosphate + lipid A-core oligosaccharideSide 2.. Functionally, involved in lipopolysaccharide (LPS) biosynthesis. Translocates lipid A-core from the inner to the outer leaflet of the inner membrane. Transmembrane domains (TMD) form a pore in the inner membrane and the ATP-binding domain (NBD) is responsible for energy generation. In Blochmanniella pennsylvanica (strain BPEN), this protein is ATP-dependent lipid A-core flippase.